Consider the following 114-residue polypeptide: Large ribosomal subunit protein P2 (114 aa).

Low complexity predominate over residues 76 to 91 (PAAAAAAGGGDSSSAA). The segment at 76–114 (PAAAAAAGGGDSSSAAKETKKEEPEEEEEDGDMGLSLFD) is disordered.

The protein belongs to the eukaryotic ribosomal protein P1/P2 family. As to quaternary structure, P1 and P2 exist as dimers at the large ribosomal subunit. In terms of processing, phosphorylated.

In terms of biological role, plays an important role in the elongation step of protein synthesis. The chain is Large ribosomal subunit protein P2 from Eimeria tenella (Coccidian parasite).